Here is a 416-residue protein sequence, read N- to C-terminus: Imidazolonepropionase (416 aa).

Residues His-82 and His-84 each contribute to the Fe(3+) site. The Zn(2+) site is built by His-82 and His-84. 4-imidazolone-5-propanoate is bound by residues Arg-91, Tyr-154, and His-187. N-formimidoyl-L-glutamate is bound at residue Tyr-154. His-252 is a binding site for Fe(3+). His-252 is a binding site for Zn(2+). 4-imidazolone-5-propanoate is bound at residue Glu-255. Asp-326 serves as a coordination point for Fe(3+). Asp-326 contacts Zn(2+). Residues Asn-328 and Gly-330 each coordinate N-formimidoyl-L-glutamate. Ser-331 contacts 4-imidazolone-5-propanoate.

This sequence belongs to the metallo-dependent hydrolases superfamily. HutI family. The cofactor is Zn(2+). Fe(3+) serves as cofactor.

It is found in the cytoplasm. It carries out the reaction 4-imidazolone-5-propanoate + H2O = N-formimidoyl-L-glutamate. The protein operates within amino-acid degradation; L-histidine degradation into L-glutamate; N-formimidoyl-L-glutamate from L-histidine: step 3/3. Catalyzes the hydrolytic cleavage of the carbon-nitrogen bond in imidazolone-5-propanoate to yield N-formimidoyl-L-glutamate. It is the third step in the universal histidine degradation pathway. The sequence is that of Imidazolonepropionase from Parabacteroides distasonis (strain ATCC 8503 / DSM 20701 / CIP 104284 / JCM 5825 / NCTC 11152).